A 489-amino-acid chain; its full sequence is Para-nitrobenzyl esterase (489 aa).

The active-site Acyl-ester intermediate is S189. Position 189 is a phosphoserine (S189). Active-site charge relay system residues include E310 and H399.

It belongs to the type-B carboxylesterase/lipase family. In terms of assembly, monomer.

In terms of biological role, catalyzes hydrolysis of several beta-lactam antibiotic PNB esters to the corresponding free acid and PNB alcohol. This Bacillus subtilis (strain 168) protein is Para-nitrobenzyl esterase (pnbA).